The sequence spans 340 residues: Mitochondrial amidoxime-reducing component 1 (340 aa).

A lipid anchor (N-myristoyl glycine) is attached at glycine 2. The Mitochondrial matrix segment spans residues glycine 2–serine 24. A helical; Signal-anchor for type II membrane protein membrane pass occupies residues threonine 25–tryptophan 44. At arginine 45–glutamine 340 the chain is on the cytoplasmic side. Positions 70, 71, and 95 each coordinate Mo-molybdopterin. The segment at phenylalanine 96 to phenylalanine 186 is MOSC N-terminal region. The MOSC domain maps to arginine 191–leucine 338. Residues serine 214, arginine 241, asparagine 243, threonine 274, arginine 275, cysteine 276, and tyrosine 320 each coordinate Mo-molybdopterin.

As to quaternary structure, component of a complex composed of cytochrome b5, NADH-cytochrome b5 reductase and MTARC1. Mo-molybdopterin is required as a cofactor.

The protein localises to the mitochondrion outer membrane. It is found in the membrane. The catalysed reaction is N(omega)-hydroxy-L-arginine + 2 Fe(II)-[cytochrome b5] + 2 H(+) = L-arginine + 2 Fe(III)-[cytochrome b5] + H2O. Functionally, catalyzes the reduction of N-oxygenated molecules, acting as a counterpart of cytochrome P450 and flavin-containing monooxygenases in metabolic cycles. As a component of prodrug-converting system, reduces a multitude of N-hydroxylated prodrugs particularly amidoximes, leading to increased drug bioavailability. May be involved in mitochondrial N(omega)-hydroxy-L-arginine (NOHA) reduction, regulating endogenous nitric oxide levels and biosynthesis. Postulated to cleave the N-OH bond of N-hydroxylated substrates in concert with electron transfer from NADH to cytochrome b5 reductase then to cytochrome b5, the ultimate electron donor that primes the active site for substrate reduction. The chain is Mitochondrial amidoxime-reducing component 1 (Mtarc1) from Mus musculus (Mouse).